The primary structure comprises 419 residues: UDP-N-acetylglucosamine 1-carboxyvinyltransferase (419 aa).

22-23 (KN) is a phosphoenolpyruvate binding site. Arg91 contacts UDP-N-acetyl-alpha-D-glucosamine. Cys115 serves as the catalytic Proton donor. A 2-(S-cysteinyl)pyruvic acid O-phosphothioketal modification is found at Cys115. UDP-N-acetyl-alpha-D-glucosamine contacts are provided by residues 120–124 (RPVDL), 160–163 (KVSV), Asp305, and Ile327.

Belongs to the EPSP synthase family. MurA subfamily.

It is found in the cytoplasm. It carries out the reaction phosphoenolpyruvate + UDP-N-acetyl-alpha-D-glucosamine = UDP-N-acetyl-3-O-(1-carboxyvinyl)-alpha-D-glucosamine + phosphate. The protein operates within cell wall biogenesis; peptidoglycan biosynthesis. In terms of biological role, cell wall formation. Adds enolpyruvyl to UDP-N-acetylglucosamine. The polypeptide is UDP-N-acetylglucosamine 1-carboxyvinyltransferase (Cronobacter sakazakii (strain ATCC BAA-894) (Enterobacter sakazakii)).